The chain runs to 84 residues: Small ribosomal subunit protein uS17 (84 aa).

The protein belongs to the universal ribosomal protein uS17 family. In terms of assembly, part of the 30S ribosomal subunit.

Its function is as follows. One of the primary rRNA binding proteins, it binds specifically to the 5'-end of 16S ribosomal RNA. This Thermoanaerobacter pseudethanolicus (strain ATCC 33223 / 39E) (Clostridium thermohydrosulfuricum) protein is Small ribosomal subunit protein uS17.